A 32-amino-acid polypeptide reads, in one-letter code: Calcitonin (32 aa).

Residues Cys1 and Cys7 are joined by a disulfide bond. Residue Pro32 is modified to Proline amide.

Belongs to the calcitonin family.

Its subcellular location is the secreted. Its function is as follows. Calcitonin is a peptide hormone that causes a rapid but short-lived drop in the level of calcium and phosphate in blood by promoting the incorporation of those ions in the bones. Calcitonin function is mediated by the calcitonin receptor/CALCR and the CALCR-RAMP2 (AMYR2) receptor complex. This is Calcitonin (CALCA) from Bos taurus (Bovine).